The primary structure comprises 465 residues: UDP-N-acetylmuramate--L-alanine ligase (465 aa).

125–131 is a binding site for ATP; sequence GTHGKTT.

Belongs to the MurCDEF family.

It is found in the cytoplasm. The enzyme catalyses UDP-N-acetyl-alpha-D-muramate + L-alanine + ATP = UDP-N-acetyl-alpha-D-muramoyl-L-alanine + ADP + phosphate + H(+). It functions in the pathway cell wall biogenesis; peptidoglycan biosynthesis. Cell wall formation. This chain is UDP-N-acetylmuramate--L-alanine ligase, found in Deinococcus geothermalis (strain DSM 11300 / CIP 105573 / AG-3a).